The chain runs to 65 residues: UPF0337 protein PA4738 (65 aa).

The protein belongs to the UPF0337 (CsbD) family.

The polypeptide is UPF0337 protein PA4738 (Pseudomonas aeruginosa (strain ATCC 15692 / DSM 22644 / CIP 104116 / JCM 14847 / LMG 12228 / 1C / PRS 101 / PAO1)).